The primary structure comprises 191 residues: Threonylcarbamoyl-AMP synthase (191 aa).

A YrdC-like domain is found at 7–191 (QSELNDALKI…FHASTGKRLR (185 aa)).

The protein belongs to the SUA5 family. TsaC subfamily.

The protein localises to the cytoplasm. The catalysed reaction is L-threonine + hydrogencarbonate + ATP = L-threonylcarbamoyladenylate + diphosphate + H2O. Functionally, required for the formation of a threonylcarbamoyl group on adenosine at position 37 (t(6)A37) in tRNAs that read codons beginning with adenine. Catalyzes the conversion of L-threonine, HCO(3)(-)/CO(2) and ATP to give threonylcarbamoyl-AMP (TC-AMP) as the acyladenylate intermediate, with the release of diphosphate. The polypeptide is Threonylcarbamoyl-AMP synthase (Psychromonas ingrahamii (strain DSM 17664 / CCUG 51855 / 37)).